We begin with the raw amino-acid sequence, 87 residues long: Insertion element IS407 uncharacterized 10.0 kDa protein (87 aa).

Belongs to the transposase 8 family.

The polypeptide is Insertion element IS407 uncharacterized 10.0 kDa protein (Burkholderia multivorans (strain ATCC 17616 / 249)).